A 2549-amino-acid chain; its full sequence is Serine/threonine-protein kinase mTOR (2549 aa).

N-acetylmethionine is present on Met-1. An interaction with NBN region spans residues 1–651; it reads MLGTGPATAT…HVVSQTAVQV (651 aa). HEAT repeat units follow at residues 16–53, 55–99, 100–137, 138–179, 180–220, 222–276, 277–313, 314–364, 365–409, 410–445, 446–494, 495–529, 530–563, 564–596, 597–636, 637–683, 686–724, 727–766, 769–811, 814–853, 857–893, 894–942, 943–988, 989–1027, 1029–1068, 1069–1105, 1106–1144, 1145–1188, 1189–1225, 1226–1273, 1274–1311, and 1312–1345; these read SSNV…MELR, MSQE…VEGG, NSTR…AMAG, DTFT…AISV, PTFF…LILT, QREP…RISS, MEGE…PRHI, TPFT…CCRD, LMEE…AFTD, TQYL…VAVR, SEFK…RAMG, PGIQ…RQIP, QLKK…GLAH, QLAS…EFEG, HSLT…SIHL, ISGH…DERF, HLAQ…MNPA, MPFL…NAPR, RPYM…VSGL, RKWV…STGY, PYRK…LLGA, LDPY…GNLP, LDEF…KCVQ, FLPQ…KSHI, PYMD…GEFK, LYLP…LFGA, NLDD…RLTE, SLDF…GKKY, QIFI…LADE, EEDP…GAAR, RVSK…QAYN, and PMAR…ELAL. At Ser-567 the chain carries Phosphoserine. A Phosphothreonine modification is found at Thr-1162. Lys-1218 is modified (N6-acetyllysine). Ser-1261 bears the Phosphoserine mark. 16 TPR repeats span residues 1346-1382, 1383-1408, 1409-1442, 1443-1473, 1474-1507, 1508-1541, 1542-1574, 1575-1614, 1615-1649, 1650-1693, 1694-1731, 1732-1786, 1787-1846, 1898-1930, 1931-1970, and 1971-2005; these read TSQD…GIVL, LGER…QKGP, TPAI…HFGE, LEIQ…NKDD, PELM…VNDE, TQAK…RDTH, DGAF…LDAE, LTAM…RREI, IRQI…PHED, MRTW…PTVH, PQVT…AQHA, IATE…DRSW, YKAW…STEG, NNLQ…VKAI, QIDT…YHPQ, and ALIY…SNTL. The FAT domain occupies 1382-1982; the sequence is LLGERAAKCR…IYPLTVASKS (601 aa). Residues Lys-1662, Lys-1702, and Arg-1749 each contribute to the 1D-myo-inositol hexakisphosphate site. The disordered stretch occupies residues 1812–1867; the sequence is DEKKKLRHASGANITNATTTATTAASAAAATSTEGSNSESEAESNESSPTPSPLQK. Residues 1826-1860 show a composition bias toward low complexity; that stretch reads TNATTTATTAASAAAATSTEGSNSESEAESNESSP. Residues 2012–2144 are sufficient for interaction with the FKBP1A/rapamycin complex; that stretch reads VSEELIRVAI…DLELAVPGTY (133 aa). Residue Lys-2066 forms a Glycyl lysine isopeptide (Lys-Gly) (interchain with G-Cter in ubiquitin) linkage. Positions 2156–2469 constitute a PI3K/PI4K catalytic domain; that stretch reads IAPSLQVITS…GVELGEPAHK (314 aa). Residue Ser-2159 is modified to Phosphoserine. The segment at 2162-2168 is G-loop; the sequence is VITSKQR. Thr-2164 is subject to Phosphothreonine. Residues Ser-2165 and Gln-2167 each contribute to the ATP site. Thr-2173 is modified (phosphothreonine; by PKB/AKT1). Residues Leu-2185, Lys-2187, Glu-2190, Tyr-2225, Gly-2238, Trp-2239, Val-2240, and Thr-2245 each coordinate ATP. The interaction with MLST8 stretch occupies residues 2258–2296; the sequence is KILLNIEHRIMLRMAPDYDHLTLMQKVEVFEHAVNNTAG. Residues 2335–2343 form a catalytic loop region; sequence GLGDRHPSN. Asn-2343 serves as a coordination point for Mg(2+). Residues Met-2345 and Ile-2356 each contribute to the ATP site. The interval 2355–2380 is activation loop; it reads HIDFGDCFEVAMTREKFPEKIPFRLT. A Mg(2+)-binding site is contributed by Asp-2357. Thr-2446 is subject to Phosphothreonine; by RPS6KB1. Ser-2448 carries the phosphoserine; by RPS6KB1 modification. At Ser-2478 the chain carries Phosphoserine. A Phosphoserine; by autocatalysis modification is found at Ser-2481. The region spanning 2517–2549 is the FATC domain; that stretch reads DTLDVPTQVELLIKQATSHENLCQCYIGWCPFW.

The protein belongs to the PI3/PI4-kinase family. In terms of assembly, part of the mechanistic target of rapamycin complex 1 (mTORC1) which contains MTOR, MLST8 and RPTOR. The mTORC1 complex is a 1 Md obligate dimer of two stoichiometric heterotetramers with overall dimensions of 290 A x 210 A x 135 A. It has a rhomboid shape and a central cavity, the dimeric interfaces are formed by interlocking interactions between the two MTOR and the two RPTOR subunits. The MLST8 subunit forms distal foot-like protuberances, and contacts only one MTOR within the complex, while the small AKT1S1/PRAS40 localizes to the midsection of the central core, in close proximity to RPTOR. mTORC1 associates with AKT1S1/PRAS40, which inhibits its activity by blocking MTOR substrate-recruitment site. Component of the mechanistic target of rapamycin complex 2 (mTORC2), consisting in two heterotretramers composed of MTOR, MLST8, RICTOR and MAPKAP1/SIN1. Interacts with PLPP7 and PML. Interacts with PRR5 and RICTOR; the interaction is direct within the mTORC2 complex and interaction with RICTOR is enhanced by deubiquitination of RICTOR by USP9X. mTORC1 and mTORC2 associate with DEPTOR, which regulates their activity. Interacts with WAC; WAC positively regulates MTOR activity by promoting the assembly of the TTT complex composed of TELO2, TTI1 and TTI2 and the RUVBL complex composed of RUVBL1 and RUVBL2 into the TTT-RUVBL complex which leads to the dimerization of the mTORC1 complex and its subsequent activation. Interacts with UBQLN1. Interacts with TTI1 and TELO2. Interacts with CLIP1; phosphorylates and regulates CLIP1. Interacts with NBN. Interacts with HTR6. Interacts with BRAT1. Interacts with MEAK7 (via C-terminal domain); the interaction increases upon nutrient stimulation. Interacts with TM4SF5; the interaction is positively regulated by arginine and is negatively regulated by leucine. Interacts with GPR137B. Interacts with NCKAP1L. Interacts with TPCN1 and TPCN2; the interaction is required for TPCN1 and TPCN2 sensitivity to ATP. Interacts with ATP6V1A and with CRYAB, forming a ternary complex. Interacts with SLC38A7; this interaction mediates the recruitment of mTORC1 to the lysosome and its subsequent activation. Interacts with TSPAN8. Autophosphorylates when part of mTORC1 or mTORC2. Phosphorylation at Ser-1261, Ser-2159 and Thr-2164 promotes autophosphorylation. Phosphorylated at Ser-2448 by RPS6KB1. Phosphorylation in the kinase domain modulates the interactions of MTOR with RPTOR and AKT1S1/PRAS40 and leads to increased intrinsic mTORC1 kinase activity. Phosphorylation at Ser-2159 by TBK1 in response to growth factors and pathogen recognition receptors promotes mTORC1 activity. Phosphorylation at Ser-2159 by TBK1 in response to EGF growth factor promotes mTORC2 activity, leading to AKT1 phosphorylation and activation. Phosphorylation at Thr-2173 in the ATP-binding region by AKT1 strongly reduces kinase activity. Post-translationally, ubiquitinated at Lys-2066 by the SCF(FBXO22) complex via 'Lys-27'-linked ubiquitination prevents mTORC1 substrate recruitment.

The protein resides in the lysosome membrane. Its subcellular location is the endoplasmic reticulum membrane. The protein localises to the golgi apparatus membrane. It localises to the cell membrane. It is found in the mitochondrion outer membrane. The protein resides in the cytoplasm. Its subcellular location is the nucleus. The protein localises to the PML body. It localises to the microsome membrane. It is found in the cytoplasmic vesicle. The protein resides in the phagosome. It carries out the reaction L-seryl-[protein] + ATP = O-phospho-L-seryl-[protein] + ADP + H(+). The catalysed reaction is L-threonyl-[protein] + ATP = O-phospho-L-threonyl-[protein] + ADP + H(+). The enzyme catalyses L-tyrosyl-[protein] + ATP = O-phospho-L-tyrosyl-[protein] + ADP + H(+). The mTORC1 complex is activated in response to nutrients, growth factors or amino acids: activation requires relocalization of the mTORC1 complex to lysosomes that is mediated by the Ragulator complex, SLC38A9, and the Rag GTPases RagA/RRAGA, RagB/RRAGB, RagC/RRAGC and RagD/RRAGD. Activation of mTORC1 by growth factors such as insulin involves AKT1-mediated phosphorylation of TSC1-TSC2, which leads to the activation of the RHEB GTPase a potent activator of the protein kinase activity of mTORC1. Insulin-stimulated and amino acid-dependent phosphorylation at Ser-1261 promotes autophosphorylation and the activation of mTORC1. On the other hand, low cellular energy levels can inhibit mTORC1 through activation of PRKAA1 while hypoxia inhibits mTORC1 through a REDD1-dependent mechanism which may also require PRKAA1. The kinase activity of MTOR within the mTORC1 complex is positively regulated by MLST8. The kinase activity of MTOR is inhibited by DEPTOR and AKT1S1. The non-canonical mTORC1 complex is independent of the RHEB GTPase and specifically mediates phosphorylation of MiT/TFE factors TFEB and TFE3 but not other mTORC1 substrates: it is activated by FLCN, which activates Rag GTPases RagC/RRAGC and RagD/RRAGD. MTOR is the target of the immunosuppressive and anti-cancer drug rapamycin which acts in complex with FKBP1A/FKBP12, and specifically inhibits its kinase activity. mTORC2 is also activated by growth factors, but seems to be nutrient-insensitive. mTORC2 associates and is directly activated by ribosomes. mTORC2 may also be regulated by RHEB but in an indirect manner through the PI3K signaling pathway. Functionally, serine/threonine protein kinase which is a central regulator of cellular metabolism, growth and survival in response to hormones, growth factors, nutrients, energy and stress signals. MTOR directly or indirectly regulates the phosphorylation of at least 800 proteins. Functions as part of 2 structurally and functionally distinct signaling complexes mTORC1 and mTORC2 (mTOR complex 1 and 2). In response to nutrients, growth factors or amino acids, mTORC1 is recruited to the lysosome membrane and promotes protein, lipid and nucleotide synthesis by phosphorylating key regulators of mRNA translation and ribosome synthesis. This includes phosphorylation of EIF4EBP1 and release of its inhibition toward the elongation initiation factor 4E (eiF4E). Moreover, phosphorylates and activates RPS6KB1 and RPS6KB2 that promote protein synthesis by modulating the activity of their downstream targets including ribosomal protein S6, eukaryotic translation initiation factor EIF4B, and the inhibitor of translation initiation PDCD4. Stimulates the pyrimidine biosynthesis pathway, both by acute regulation through RPS6KB1-mediated phosphorylation of the biosynthetic enzyme CAD, and delayed regulation, through transcriptional enhancement of the pentose phosphate pathway which produces 5-phosphoribosyl-1-pyrophosphate (PRPP), an allosteric activator of CAD at a later step in synthesis, this function is dependent on the mTORC1 complex. Regulates ribosome synthesis by activating RNA polymerase III-dependent transcription through phosphorylation and inhibition of MAF1 an RNA polymerase III-repressor. Activates dormant ribosomes by mediating phosphorylation of SERBP1, leading to SERBP1 inactivation and reactivation of translation. In parallel to protein synthesis, also regulates lipid synthesis through SREBF1/SREBP1 and LPIN1. To maintain energy homeostasis mTORC1 may also regulate mitochondrial biogenesis through regulation of PPARGC1A. In the same time, mTORC1 inhibits catabolic pathways: negatively regulates autophagy through phosphorylation of ULK1. Under nutrient sufficiency, phosphorylates ULK1 at 'Ser-758', disrupting the interaction with AMPK and preventing activation of ULK1. Also prevents autophagy through phosphorylation of the autophagy inhibitor DAP. Also prevents autophagy by phosphorylating RUBCNL/Pacer under nutrient-rich conditions. Prevents autophagy by mediating phosphorylation of AMBRA1, thereby inhibiting AMBRA1 ability to mediate ubiquitination of ULK1 and interaction between AMBRA1 and PPP2CA. mTORC1 exerts a feedback control on upstream growth factor signaling that includes phosphorylation and activation of GRB10 a INSR-dependent signaling suppressor. Among other potential targets mTORC1 may phosphorylate CLIP1 and regulate microtubules. The mTORC1 complex is inhibited in response to starvation and amino acid depletion. The non-canonical mTORC1 complex, which acts independently of RHEB, specifically mediates phosphorylation of MiT/TFE factors TFEB and TFE3 in the presence of nutrients, promoting their cytosolic retention and inactivation. Upon starvation or lysosomal stress, inhibition of mTORC1 induces dephosphorylation and nuclear translocation of TFEB and TFE3, promoting their transcription factor activity. The mTORC1 complex regulates pyroptosis in macrophages by promoting GSDMD oligomerization. MTOR phosphorylates RPTOR which in turn inhibits mTORC1. As part of the mTORC2 complex, MTOR transduces signals from growth factors to pathways involved in proliferation, cytoskeletal organization, lipogenesis and anabolic output. In response to growth factors, mTORC2 phosphorylates and activates AGC protein kinase family members, including AKT (AKT1, AKT2 and AKT3), PKC (PRKCA, PRKCB and PRKCE) and SGK1. In contrast to mTORC1, mTORC2 is nutrient-insensitive. mTORC2 plays a critical role in AKT1 activation by mediating phosphorylation of different sites depending on the context, such as 'Thr-450', 'Ser-473', 'Ser-477' or 'Thr-479', facilitating the phosphorylation of the activation loop of AKT1 on 'Thr-308' by PDPK1/PDK1 which is a prerequisite for full activation. mTORC2 also regulates the phosphorylation of SGK1 at 'Ser-422'. mTORC2 may regulate the actin cytoskeleton, through phosphorylation of PRKCA, PXN and activation of the Rho-type guanine nucleotide exchange factors RHOA and RAC1A or RAC1B. The mTORC2 complex also phosphorylates various proteins involved in insulin signaling, such as FBXW8 and IGF2BP1. May also regulate insulin signaling by acting as a tyrosine protein kinase that catalyzes phosphorylation of IGF1R and INSR. Regulates osteoclastogenesis by adjusting the expression of CEBPB isoforms. Plays an important regulatory role in the circadian clock function; regulates period length and rhythm amplitude of the suprachiasmatic nucleus (SCN) and liver clocks. In Rattus norvegicus (Rat), this protein is Serine/threonine-protein kinase mTOR.